Here is a 154-residue protein sequence, read N- to C-terminus: Anaerobic ribonucleoside-triphosphate reductase-activating protein (154 aa).

Positions 26, 30, and 33 each coordinate [4Fe-4S] cluster. Residues 32–34 and G74 each bind S-adenosyl-L-methionine; that span reads GCY.

Belongs to the organic radical-activating enzymes family. Forms a tetramer composed of two NrdD and two NrdG subunits. It depends on [4Fe-4S] cluster as a cofactor.

Its subcellular location is the cytoplasm. The enzyme catalyses glycyl-[protein] + reduced [flavodoxin] + S-adenosyl-L-methionine = glycin-2-yl radical-[protein] + semiquinone [flavodoxin] + 5'-deoxyadenosine + L-methionine + H(+). In terms of biological role, activation of anaerobic ribonucleoside-triphosphate reductase under anaerobic conditions by generation of an organic free radical, using S-adenosylmethionine and reduced flavodoxin as cosubstrates to produce 5'-deoxy-adenosine. The protein is Anaerobic ribonucleoside-triphosphate reductase-activating protein (nrdG) of Escherichia coli O157:H7.